Consider the following 672-residue polypeptide: Probable urocanate hydratase (672 aa).

Residues 128–129, glutamine 206, 253–255, glutamate 273, 318–319, 340–344, 351–352, tyrosine 400, and glycine 592 each bind NAD(+); these read GG, GMS, NV, QTSLH, and YY.

It belongs to the urocanase family. Requires NAD(+) as cofactor.

It carries out the reaction 4-imidazolone-5-propanoate = trans-urocanate + H2O. It participates in amino-acid degradation; L-histidine degradation into L-glutamate; N-formimidoyl-L-glutamate from L-histidine: step 2/3. This Dictyostelium discoideum (Social amoeba) protein is Probable urocanate hydratase (uroc1).